A 125-amino-acid chain; its full sequence is Bublin coiled-coil protein (125 aa).

Residues 46–95 (IRKLDTQLDHLNDYMSKMEERLKAHNDRMMETLKQQKEEREKRRRSFHER) adopt a coiled-coil conformation. A disordered region spans residues 79 to 125 (KQQKEEREKRRRSFHERMSQNQSEDEEFKKQMSSILKRVQSVKRTEK).

In terms of tissue distribution, expressed in many epithelial tissues, including the pharynx, intestine, excretory canal and hypodermis.

The protein localises to the cell junction. It localises to the cytoplasm. The protein resides in the cytoskeleton. Functionally, dynamic component of the endotube in intestinal cells, interacts with intermediate filament and regulates intestinal lumen morphology. In Caenorhabditis elegans, this protein is Bublin coiled-coil protein.